The chain runs to 342 residues: Isopentenyl-diphosphate delta-isomerase (342 aa).

Substrate is bound at residue 11 to 12; sequence RK. Residues serine 68, 69–71, serine 99, and asparagine 127 contribute to the FMN site; that span reads SMT. Residue 99–101 participates in substrate binding; that stretch reads SMR. Substrate is bound at residue glutamine 162. Residue glutamate 163 participates in Mg(2+) binding. Residues lysine 194, threonine 224, 274-276, and 295-296 each bind FMN; these read GLK and AG.

This sequence belongs to the IPP isomerase type 2 family. As to quaternary structure, homooctamer. Dimer of tetramers. The cofactor is FMN. NADPH is required as a cofactor. Mg(2+) serves as cofactor.

Its subcellular location is the cytoplasm. The catalysed reaction is isopentenyl diphosphate = dimethylallyl diphosphate. Functionally, involved in the biosynthesis of isoprenoids. Catalyzes the 1,3-allylic rearrangement of the homoallylic substrate isopentenyl (IPP) to its allylic isomer, dimethylallyl diphosphate (DMAPP). This is Isopentenyl-diphosphate delta-isomerase from Rickettsia rickettsii (strain Iowa).